A 681-amino-acid polypeptide reads, in one-letter code: DNA-directed RNA polymerase subunit beta' (681 aa).

4 residues coordinate Zn(2+): Cys69, Cys71, Cys87, and Cys90. Mg(2+)-binding residues include Asp489, Asp491, and Asp493.

This sequence belongs to the RNA polymerase beta' chain family. RpoC1 subfamily. As to quaternary structure, in plastids the minimal PEP RNA polymerase catalytic core is composed of four subunits: alpha, beta, beta', and beta''. When a (nuclear-encoded) sigma factor is associated with the core the holoenzyme is formed, which can initiate transcription. Mg(2+) serves as cofactor. The cofactor is Zn(2+).

Its subcellular location is the plastid. The protein resides in the chloroplast. The enzyme catalyses RNA(n) + a ribonucleoside 5'-triphosphate = RNA(n+1) + diphosphate. In terms of biological role, DNA-dependent RNA polymerase catalyzes the transcription of DNA into RNA using the four ribonucleoside triphosphates as substrates. The protein is DNA-directed RNA polymerase subunit beta' of Nicotiana sylvestris (Wood tobacco).